Here is a 137-residue protein sequence, read N- to C-terminus: Ribosomal RNA large subunit methyltransferase H (137 aa).

S-adenosyl-L-methionine-binding positions include L56, G85, and 104 to 109; that span reads LSPLTL.

Belongs to the RNA methyltransferase RlmH family. As to quaternary structure, homodimer.

It is found in the cytoplasm. It catalyses the reaction pseudouridine(1915) in 23S rRNA + S-adenosyl-L-methionine = N(3)-methylpseudouridine(1915) in 23S rRNA + S-adenosyl-L-homocysteine + H(+). Its function is as follows. Specifically methylates the pseudouridine at position 1915 (m3Psi1915) in 23S rRNA. This chain is Ribosomal RNA large subunit methyltransferase H, found in Thermus thermophilus (strain ATCC 27634 / DSM 579 / HB8).